The following is a 766-amino-acid chain: Slit homolog 2 protein (766 aa).

Positions 1–30 (MSGIGWQTLSLSLALVLSILNKVAPHACPA) are cleaved as a signal peptide. Residues 31 to 55 (QCSCSGSTVDCHGLALRIVPRNIPR) enclose the LRRNT domain. 6 LRR repeats span residues 56–77 (NTER…DFAG), 80–101 (HLRI…AFHD), 104–125 (ELER…LFLG), 128–149 (KLYR…AFRG), 152–173 (DIKN…AFRA), and 176–197 (DLEV…SFNH). A glycan (N-linked (GlcNAc...) asparagine) is linked at asparagine 66. Asparagine 186 carries an N-linked (GlcNAc...) asparagine glycan. The LRRCT 1 domain maps to 209-259 (NNLYCDCHLAWLSDWLRQRPRVGLYTQCMGPSHLRGHNVAEVQKREFVCSD). The LRRNT 2 domain maps to 268 to 304 (MAPSCSVLHCPIACTCSNNIVDCRGKGLTEIPTNLPE). Cysteine 281 and cysteine 290 are oxidised to a cystine. LRR repeat units follow at residues 305 to 326 (TITE…AFSP), 329 to 350 (KLRR…AFQG), 353 to 374 (SLNS…LFEG), 377 to 398 (SLQL…AFQD), and 401 to 422 (NLNL…TFSA). An LRRCT 2 domain is found at 434-484 (NPFICDCHLKWLADYLHTNPIETSGARCTSPRRLANKRIGQIKSKKFRCSG). 4 disulfides stabilise this stretch: cysteine 438-cysteine 461, cysteine 440-cysteine 482, cysteine 502-cysteine 508, and cysteine 506-cysteine 515. Positions 493 to 529 (SGDCFADLACPEKCRCEGTTVDCSNQKLNKIPDHIPQ) constitute an LRRNT 3 domain. LRR repeat units follow at residues 530-551 (YTAE…GIFK), 555-576 (QLRK…AFEG), 579-600 (GVNE…MFKG), 603-624 (SLKT…SFTG), and 627-648 (SVRL…AFGT). Asparagine 560 is a glycosylation site (N-linked (GlcNAc...) asparagine). A glycan (N-linked (GlcNAc...) asparagine) is linked at asparagine 619. Residues 660 to 710 (NPFNCNCHLAWLGEWLRRKRIVTGNPRCQKPYFLKEIPIQDVAIQDFTCDD) enclose the LRRCT 3 domain. Intrachain disulfides connect cysteine 664–cysteine 687, cysteine 666–cysteine 708, cysteine 723–cysteine 729, and cysteine 727–cysteine 736. An LRRNT 4 domain is found at 714–750 (DNSCSPLSRCPSECTCLDTVVRCSNKGLKVLPKGIPR).

As to quaternary structure, homodimer. Binds ROBO1 and ROBO2 with high affinity. Interacts with GREM1.

Its subcellular location is the secreted. Its function is as follows. Thought to act as molecular guidance cue in cellular migration, and function appears to be mediated by interaction with roundabout homolog receptors. During neural development involved in axonal navigation at the ventral midline of the neural tube and projection of axons to different regions. SLIT1 and SLIT2 seem to be essential for midline guidance in the forebrain by acting as repulsive signal preventing inappropriate midline crossing by axons projecting from the olfactory bulb. In spinal cord development may play a role in guiding commissural axons once they reached the floor plate by modulating the response to netrin. In vitro, silences the attractive effect of NTN1 but not its growth-stimulatory effect and silencing requires the formation of a ROBO1-DCC complex. May be implicated in spinal cord midline post-crossing axon repulsion. In vitro, only commissural axons that crossed the midline responded to SLIT2. In the developing visual system appears to function as repellent for retinal ganglion axons by providing a repulsion that directs these axons along their appropriate paths prior to, and after passage through, the optic chiasm. In vitro, collapses and repels retinal ganglion cell growth cones. Seems to play a role in branching and arborization of CNS sensory axons, and in neuronal cell migration. Seems to be involved in regulating leukocyte migration. This is Slit homolog 2 protein (Slit2) from Rattus norvegicus (Rat).